The chain runs to 665 residues: Golgi-associated RAB2B interactor protein 3 (665 aa).

Disordered regions lie at residues 211-240 (EIRG…AGGE), 272-296 (AAAG…GTAG), and 480-590 (SEGY…GSVS). A compositionally biased stretch (polar residues) spans 219–232 (NSRPQSSPTVSEAT). Residues 499–513 (EAKEKRERREKDRTS) are compositionally biased toward basic and acidic residues. Composition is skewed to basic residues over residues 514-538 (SRKS…RKTS) and 554-566 (GHGR…HSSS). Residues 515–531 (RKSSHHRRTGMSRHSSK) carry the Bipartite nuclear localization signal motif. Phosphoserine is present on Ser652.

This sequence belongs to the GARIN family. In terms of assembly, interacts (via N-terminus) with RAB2B (in GTP-bound form). Interacts with FRG1. In terms of tissue distribution, expressed in adult spermatocytes and spermatids.

It localises to the golgi apparatus. The protein resides in the nucleus. It is found in the cajal body. May be involved in RNA biogenesis. The protein is Golgi-associated RAB2B interactor protein 3 of Mus musculus (Mouse).